The primary structure comprises 100 residues: Urease subunit gamma (100 aa).

Belongs to the urease gamma subunit family. In terms of assembly, heterotrimer of UreA (gamma), UreB (beta) and UreC (alpha) subunits. Three heterotrimers associate to form the active enzyme. Post-translationally, although not discussed in the published references, Met-1 is represented in the submitted PDB entries as being modified by either a formyl, a carboxyl, or an acetyl group. The N-terminal is probably N-(dihydroxymethyl)methionine, the hydrated form of N-formylmethionine.

The protein resides in the cytoplasm. It catalyses the reaction urea + 2 H2O + H(+) = hydrogencarbonate + 2 NH4(+). It functions in the pathway nitrogen metabolism; urea degradation; CO(2) and NH(3) from urea (urease route): step 1/1. The polypeptide is Urease subunit gamma (Sporosarcina pasteurii (Bacillus pasteurii)).